Reading from the N-terminus, the 249-residue chain is Metallo-beta-lactamase type 2 (249 aa).

Residues 1–18 (MKTVFILISMLFPVAVMA) form the signal peptide. H99, H101, D103, H162, and C181 together coordinate Zn(2+). Residues K184 and N193 each contribute to the substrate site. H223 lines the Zn(2+) pocket.

The protein belongs to the metallo-beta-lactamase superfamily. Class-B beta-lactamase family. In terms of assembly, monomer. Zn(2+) is required as a cofactor.

Its subcellular location is the periplasm. The enzyme catalyses a beta-lactam + H2O = a substituted beta-amino acid. With respect to regulation, competitively inhibited by 4-morpholineethanesulfonic acid (MES), SB236050 and biphenyl tetrazoles (BPTs). Also inhibited by chelating agents such as EDTA and 1,10-phenanthroline. CcrA is not susceptible to inactivation by the beta-lactamase-blocking agents clavulanic acid or tazobactam. Confers resistance to the different beta-lactams antibiotics (penicillin, cephalosporin and carbapenem) via the hydrolysis of the beta-lactam ring. This chain is Metallo-beta-lactamase type 2, found in Bacteroides fragilis.